Reading from the N-terminus, the 368-residue chain is tRNA(Met) cytidine acetate ligase (368 aa).

ATP-binding positions include 7–20 (IAEFNPFHNGHKYL), Gly-96, Asn-152, and Arg-175.

This sequence belongs to the TmcAL family.

The protein localises to the cytoplasm. It carries out the reaction cytidine(34) in elongator tRNA(Met) + acetate + ATP = N(4)-acetylcytidine(34) in elongator tRNA(Met) + AMP + diphosphate. Catalyzes the formation of N(4)-acetylcytidine (ac(4)C) at the wobble position of elongator tRNA(Met), using acetate and ATP as substrates. First activates an acetate ion to form acetyladenylate (Ac-AMP) and then transfers the acetyl group to tRNA to form ac(4)C34. The protein is tRNA(Met) cytidine acetate ligase of Streptococcus pyogenes serotype M28 (strain MGAS6180).